Here is a 475-residue protein sequence, read N- to C-terminus: tRNA modification GTPase MnmE (475 aa).

Arg-24, Glu-81, and Lys-124 together coordinate (6S)-5-formyl-5,6,7,8-tetrahydrofolate. A TrmE-type G domain is found at 220 to 397 (GLSVVLAGQP…MRSELLRLIG (178 aa)). Asn-230 contributes to the K(+) binding site. GTP contacts are provided by residues 230 to 235 (NVGKSS), 249 to 255 (TPIAGTT), 274 to 277 (DTAG), and 378 to 380 (SAR). Ser-234 serves as a coordination point for Mg(2+). 3 residues coordinate K(+): Thr-249, Ile-251, and Thr-254. Residue Thr-255 participates in Mg(2+) binding. Lys-475 provides a ligand contact to (6S)-5-formyl-5,6,7,8-tetrahydrofolate.

It belongs to the TRAFAC class TrmE-Era-EngA-EngB-Septin-like GTPase superfamily. TrmE GTPase family. Homodimer. Heterotetramer of two MnmE and two MnmG subunits. K(+) is required as a cofactor.

Its subcellular location is the cytoplasm. In terms of biological role, exhibits a very high intrinsic GTPase hydrolysis rate. Involved in the addition of a carboxymethylaminomethyl (cmnm) group at the wobble position (U34) of certain tRNAs, forming tRNA-cmnm(5)s(2)U34. The polypeptide is tRNA modification GTPase MnmE (Cupriavidus metallidurans (strain ATCC 43123 / DSM 2839 / NBRC 102507 / CH34) (Ralstonia metallidurans)).